Consider the following 824-residue polypeptide: Dapper 1-B (824 aa).

Disordered stretches follow at residues 1–33, 131–150, and 515–534; these read MKPI…RQRT, EEHL…LSDG, and HASS…EGSS. The segment at 2-343 is interaction with tcf7l1-A; sequence KPIPAAPEPL…PVRTNKPRTS (342 aa). The span at 16–33 shows a compositional bias: basic and acidic residues; sequence DSPRRKDKGEAESERQRT. Positions 84–139 form a coiled coil; sequence EEKFLEDNILLLKKQLNCLRKRDAGLLSQLHELDKQINDLRIDVEKTEEHLETDSR. Positions 520 to 530 are enriched in basic and acidic residues; sequence FDERPPLDFKS. The PDZ-binding signature appears at 821-824; sequence MTTV.

This sequence belongs to the dapper family. In terms of assembly, interacts with dbf4 and tcf7l1-A. Interacts with dvl2/dsh; the interaction is required for dact1-b phosphorylation by CaMK1D and seems to become disrupted by the phosphorylation. Post-translationally, phosphorylated by CaMK1D; the phosphorylation requires binding to dvl2/dsh. Expressed both in the dorsal lip in early gastrula and throughout the posterior presumptive ectoderm in early neurula. Expressed in the dorsal neural folds at the tailbud stage and highly expressed in the tadpole head, including the brain, retina and cartilaginous branchial arch derivatives.

The protein localises to the cytoplasm. The protein resides in the nucleus. Functionally, involved in regulation of intracellular signaling pathways during development. Specifically thought to play a role in canonical and/or non-canonical Wnt signaling pathways through interaction with DSH (Dishevelled) family proteins. Binds to dvl2 to regulate the degradation of beta-catenin (ctnnb1-A and possibly ctnnb1-B), thereby modulating the transcriptional activation of target genes of the Wnt signaling pathway. Seems to promote beta-catenin degradation if not phosphorylated and to block beta-catenin degradation if phosphorylated by CaMK1D. Involved in regulation of catenin delta/ctnnd1 protein level. May also bind to and directly stimulate the activity of tcf7l1-A. Also regulates the activation by dvl2 of jnk, a component of ctnnb1/beta-catenin-independent frizzled signaling. Required for notochord and head formation. The protein is Dapper 1-B (dact1-b) of Xenopus laevis (African clawed frog).